The following is a 280-amino-acid chain: F420-dependent methylenetetrahydromethanopterin dehydrogenase (280 aa).

This sequence belongs to the MTD family.

The enzyme catalyses 5,10-methylenetetrahydromethanopterin + oxidized coenzyme F420-(gamma-L-Glu)(n) + 2 H(+) = 5,10-methenyl-5,6,7,8-tetrahydromethanopterin + reduced coenzyme F420-(gamma-L-Glu)(n). It participates in one-carbon metabolism; methanogenesis from CO(2); 5,10-methylene-5,6,7,8-tetrahydromethanopterin from 5,10-methenyl-5,6,7,8-tetrahydromethanopterin (coenzyme F420 route): step 1/1. Its function is as follows. Catalyzes the reversible reduction of methenyl-H(4)MPT(+) to methylene-H(4)MPT. In Methanospirillum hungatei JF-1 (strain ATCC 27890 / DSM 864 / NBRC 100397 / JF-1), this protein is F420-dependent methylenetetrahydromethanopterin dehydrogenase.